A 299-amino-acid polypeptide reads, in one-letter code: MAIDIFQSLKNCVFDLQRADVQNYQQPLKQLARLLNSENLQSVNAHLTRNVELDTFLARSEDTESSMAGSAVLQWPDEPADILGLKLLLIEKMADDNNFSFNFCHTFFYDRNIIESIRKFTSSLVAPFVRDYQLYVENQHDPEPAVFRPVSRKIFIVHGHDNDALQSVARFISRIGLEEIILSERPDGSRTIIEKFEAESGDVSFAIVLMTPDDSGSALASESTRLRARQNVLYELGYFAGKLGRGKVLVLRKGDIEIPSDLAGVLYTELDEHGGWKRKLLSELAYAGVPFDKDKALSA.

This is an uncharacterized protein from Escherichia coli (strain K12).